The following is a 439-amino-acid chain: Alpha-1,3-mannosyl-glycoprotein 4-beta-N-acetylglucosaminyltransferase-like protein MGAT4E (439 aa).

Its pathway is protein modification; protein glycosylation. In terms of biological role, glycosyltransferase-like protein that may participate in the transfer of N-acetylglucosamine (GlcNAc) to the core mannose residues of N-linked glycans. This chain is Alpha-1,3-mannosyl-glycoprotein 4-beta-N-acetylglucosaminyltransferase-like protein MGAT4E, found in Mus musculus (Mouse).